We begin with the raw amino-acid sequence, 224 residues long: MKIYGIYMDRPLSQEENERFMSFISPEKREKCRRFYHKEDAHRTLLGDVLVRSVISRQYQLDKSDIRFSTQEYGKPCIPDLPDAHFNISHSGRWVICAFDSQPIGIDIEKTKPISLEIAKRFFSKTEYSDLLAKDKDEQTDYFYHLWSMKESFIKQEGKGLSLPLDSFSVRLHQDGQVSIELPDSHSPCYIKTYEVDPGYKMAVCAAHPDFPEDITMVSYEELL.

Mg(2+) contacts are provided by Asp-107, Glu-109, and Glu-151. The tract at residues 158–189 (GKGLSLPLDSFSVRLHQDGQVSIELPDSHSPC) is peptidyl carrier protein binding.

Belongs to the P-Pant transferase superfamily. Gsp/Sfp/HetI/AcpT family. As to quaternary structure, monomer in solution. It depends on Mg(2+) as a cofactor.

It carries out the reaction apo-[ACP] + CoA = holo-[ACP] + adenosine 3',5'-bisphosphate + H(+). Functionally, activates the seven peptidyl carrier protein (PCP) domains of the first three subunits (SrfAA, SrfAB and SrfAC) of surfactin synthetase by transferring the 4'-phosphopantetheinyl moiety of coenzyme A (CoA) to a serine residue. Required for cells of B.subtilis to become producers of the lipopeptide antibiotics surfactin and plipastatin B1. This is 4'-phosphopantetheinyl transferase Sfp (sfp) from Bacillus subtilis (strain 168).